Here is a 250-residue protein sequence, read N- to C-terminus: Aquaporin TIP2-3 (250 aa).

The residue at position 1 (Met1) is an N-acetylmethionine. Residues 1-24 (MVKIEVGSVGDSFSVSSLKAYLSE) are Cytoplasmic-facing. Lys3 is subject to N6,N6-dimethyllysine. A helical membrane pass occupies residues 25–45 (FIATLLFVFAGVGSAVAFAKL). The Vacuolar portion of the chain corresponds to 46-54 (TSDGALDPA). The chain crosses the membrane as a helical span at residues 55-75 (GLVAIAIAHAFALFVGVSIAA). The Cytoplasmic segment spans residues 76 to 101 (NISGGHLNPAVTLGLAIGGNITLITG). The NPA 1 signature appears at 83–85 (NPA). A helical transmembrane segment spans residues 102 to 122 (FFYWIAQCLGSIVACLLLVFV). The Vacuolar segment spans residues 123–134 (TNGKSVPTHGVS). A helical membrane pass occupies residues 135–155 (AGLGAVEGVVMEIVVTFALVY). The Cytoplasmic segment spans residues 156 to 168 (TVYATAADPKKGS). A helical transmembrane segment spans residues 169–189 (LGTIAPIAIGFIVGANILAAG). Topologically, residues 190-217 (PFSGGSMNPARSFGPAVVSGDLSQIWIY) are vacuolar. Residues 197–199 (NPA) carry the NPA 2 motif. A helical transmembrane segment spans residues 218-238 (WVGPLVGGALAGLIYGDVFIG). The Cytoplasmic portion of the chain corresponds to 239–250 (SYEAVETREIRV).

The protein belongs to the MIP/aquaporin (TC 1.A.8) family. TIP (TC 1.A.8.10) subfamily. In terms of assembly, interacts with cucumber mosaic virus (CMV) Protein 1a. Widely expressed.

It localises to the vacuole membrane. Transports methylammonium or ammonium in yeast cells, preferentially at high medium pH. May participate in vacuolar compartmentation and detoxification of ammonium. The polypeptide is Aquaporin TIP2-3 (TIP2-3) (Arabidopsis thaliana (Mouse-ear cress)).